Reading from the N-terminus, the 373-residue chain is ATP phosphoribosyltransferase regulatory subunit (373 aa).

This sequence belongs to the class-II aminoacyl-tRNA synthetase family. HisZ subfamily. In terms of assembly, heteromultimer composed of HisG and HisZ subunits.

It is found in the cytoplasm. It participates in amino-acid biosynthesis; L-histidine biosynthesis; L-histidine from 5-phospho-alpha-D-ribose 1-diphosphate: step 1/9. Required for the first step of histidine biosynthesis. May allow the feedback regulation of ATP phosphoribosyltransferase activity by histidine. In Rhizobium leguminosarum bv. trifolii (strain WSM2304), this protein is ATP phosphoribosyltransferase regulatory subunit.